We begin with the raw amino-acid sequence, 193 residues long: MRNIVLASSSPRRKDLLEQIKLPFEIIPSDIEENISELSGTPAKKAEQLSYQKARDVADKVQKGLILGADTIVVIDDEILGKPKDSEDAYNMLKKLSGKEHEVITGICLLDLDNKIELIQHETTFVKFIELDDEKIKAYIKSGEAFGKAGSYAAQGVGAIFVKGIKGCYSNIVGLPLNRLGNMLEKLNEKIIK.

Residue D70 is the Proton acceptor of the active site.

The protein belongs to the Maf family. YhdE subfamily. A divalent metal cation serves as cofactor.

The protein resides in the cytoplasm. It catalyses the reaction dTTP + H2O = dTMP + diphosphate + H(+). It carries out the reaction UTP + H2O = UMP + diphosphate + H(+). Functionally, nucleoside triphosphate pyrophosphatase that hydrolyzes dTTP and UTP. May have a dual role in cell division arrest and in preventing the incorporation of modified nucleotides into cellular nucleic acids. The sequence is that of dTTP/UTP pyrophosphatase from Ruminiclostridium cellulolyticum (strain ATCC 35319 / DSM 5812 / JCM 6584 / H10) (Clostridium cellulolyticum).